A 176-amino-acid chain; its full sequence is Ferritin, middle subunit (176 aa).

The Ferritin-like diiron domain occupies 7–156; sequence QNYHHDCERA…DHITNLTKMD (150 aa). Fe cation is bound by residues Glu24, Glu59, His62, Glu104, and Gln138.

This sequence belongs to the ferritin family. As to quaternary structure, oligomer of 24 subunits. There are at least two types of subunits. The functional molecule forms a roughly spherical shell with a diameter of 12 nm and contains a central cavity into which the insoluble mineral iron core is deposited. As to expression, almost exclusively in the gonads.

It catalyses the reaction 4 Fe(2+) + O2 + 4 H(+) = 4 Fe(3+) + 2 H2O. Stores iron in a soluble, non-toxic, readily available form. Important for iron homeostasis. Has ferroxidase activity. Iron is taken up in the ferrous form and deposited as ferric hydroxides after oxidation. The sequence is that of Ferritin, middle subunit from Salmo salar (Atlantic salmon).